Consider the following 261-residue polypeptide: MPQNEYIERWQKQHGKRFDHDERKRKRIAREGHDGSKKAQNYRGLRAKLYAEKRRKEKIQMKKTIRAHEERNVKTSEPAEPSTEALPQYLLDRSNEKNAKALSSAIKQKRNEKAARFSVPLPKVKGISEEEMFSVVKTGKKTAKKSWKRMITKPTFVGPGFTRRPVKYERFIRPMGLRYKKANVTHPELSVTVQLPIISVKKNPQNPLYTQLGVLTKGTIIEVNVSELGLVTAGGKVVWGRYAQITNNPENDGCLNAVLLV.

Basic and acidic residues-rich tracts occupy residues 1–22 and 49–74; these read MPQN…DHDE and LYAE…RNVK. Positions 1–84 are disordered; it reads MPQNEYIERW…TSEPAEPSTE (84 aa). Residues 15-22 carry the Nuclear localization signal motif; sequence GKRFDHDE.

This sequence belongs to the eukaryotic ribosomal protein eS8 family. Ribosome biogenesis protein NSA2 subfamily. Component of the pre-66S ribosomal particle. Interacts with NOP7 and RRP1. Interacts with RSA4 (via WD repeats).

Its subcellular location is the nucleus. It is found in the nucleolus. Its function is as follows. Involved in the biogenesis of the 60S ribosomal subunit. May play a part in the quality control of pre-60S particles. The protein is Ribosome biogenesis protein NSA2 (NSA2) of Phaeosphaeria nodorum (strain SN15 / ATCC MYA-4574 / FGSC 10173) (Glume blotch fungus).